The sequence spans 503 residues: Alpha-1,3/1,6-mannosyltransferase ALG2 (503 aa).

Transmembrane regions (helical) follow at residues 64 to 84 (VYGD…FATI) and 112 to 132 (TCIP…CHFP). Residues asparagine 170, asparagine 303, asparagine 371, and asparagine 400 are each glycosylated (N-linked (GlcNAc...) asparagine). The helical transmembrane segment at 443–463 (WEIFGISFSNFILHMAFIKIL) threads the bilayer.

This sequence belongs to the glycosyltransferase group 1 family. Glycosyltransferase 4 subfamily. Interacts with ALG1.

The protein localises to the endoplasmic reticulum membrane. The enzyme catalyses a beta-D-Man-(1-&gt;4)-beta-D-GlcNAc-(1-&gt;4)-alpha-D-GlcNAc-diphospho-di-trans,poly-cis-dolichol + GDP-alpha-D-mannose = an alpha-D-Man-(1-&gt;3)-beta-D-Man-(1-&gt;4)-beta-D-GlcNAc-(1-&gt;4)-alpha-D-GlcNAc-diphospho-di-trans,poly-cis-dolichol + GDP + H(+). The catalysed reaction is an alpha-D-Man-(1-&gt;3)-beta-D-Man-(1-&gt;4)-beta-D-GlcNAc-(1-&gt;4)-alpha-D-GlcNAc-diphospho-di-trans,poly-cis-dolichol + GDP-alpha-D-mannose = an alpha-D-Man-(1-&gt;3)-[alpha-D-Man-(1-&gt;6)]-beta-D-Man-(1-&gt;4)-beta-D-GlcNAc-(1-&gt;4)-alpha-D-GlcNAc-diphospho-di-trans,poly-cis-dolichol + GDP + H(+). The protein operates within protein modification; protein glycosylation. Functionally, mannosylates Man(2)GlcNAc(2)-dolichol diphosphate and Man(1)GlcNAc(2)-dolichol diphosphate to form Man(3)GlcNAc(2)-dolichol diphosphate. This is Alpha-1,3/1,6-mannosyltransferase ALG2 (ALG2) from Saccharomyces cerevisiae (strain ATCC 204508 / S288c) (Baker's yeast).